Here is a 250-residue protein sequence, read N- to C-terminus: Bacteriorhodopsin-I (250 aa).

Helical transmembrane passes span 7-27, 42-62, 81-101, 114-134, 139-159, 185-205, and 207-227; these read EGIW…YFIA, IATI…ALGF, YTDW…LAGA, VLMI…VLSA, LVWW…LFSS, VWLV…LVGI, and IETA…GIIL. Residue Lys220 is modified to N6-(retinylidene)lysine.

This sequence belongs to the archaeal/bacterial/fungal opsin family. Post-translationally, the covalent binding of retinal to the apoprotein, bacterioopsin, generates bacteriorhodopsin.

Its subcellular location is the membrane. Functionally, light-driven proton pump. This is Bacteriorhodopsin-I (bop) from Haloarcula marismortui (strain ATCC 43049 / DSM 3752 / JCM 8966 / VKM B-1809) (Halobacterium marismortui).